The chain runs to 502 residues: 9-beta-pimara-7,15-diene oxidase (502 aa).

2 helical membrane passes run 4-26 and 106-128; these read INSE…ALLT and LLVS…GAYW. A heme-binding site is contributed by Cys-438.

Belongs to the cytochrome P450 family. Heme is required as a cofactor.

The protein localises to the membrane. It catalyses the reaction 9beta-pimara-7,15-diene + 3 reduced [NADPH--hemoprotein reductase] + 3 O2 = 9beta-pimara-7,15-dien-19-oate + 3 oxidized [NADPH--hemoprotein reductase] + 4 H2O + 4 H(+). Functionally, involved in momilactone phytoalexins biosynthesis; acts as a multifunctional diterpene oxidase. Participates in the biosynthetic steps between 9-beta-pimara-7,15-diene and 3-beta-hydroxy-9-beta-pimara-7,15-dien-19,6-beta-olide. Also catalyzes consecutive oxidations at C19 of syn-stemod-13(17)-ene. The polypeptide is 9-beta-pimara-7,15-diene oxidase (CYP99A3) (Oryza sativa subsp. japonica (Rice)).